The sequence spans 214 residues: Ceramide-1-phosphate transfer protein (214 aa).

An N-acylsphingoid base 1-phosphate-binding residues include Asp-56, Lys-60, Arg-106, Arg-110, and His-150.

It belongs to the GLTP family. Ubiquitous. Detected in heart, brain, placenta, lung, liver, skeletal muscle, kidney, pancreas, spleen, thymus, prostate, testis, ovary, small intestine, colon and peripheral blood leukocytes.

Its subcellular location is the cytoplasm. It localises to the cytosol. It is found in the golgi apparatus. The protein resides in the trans-Golgi network membrane. The protein localises to the cell membrane. Its subcellular location is the endosome membrane. It localises to the nucleus outer membrane. The catalysed reaction is N-(hexadecanoyl)-sphing-4-enine-1-phosphate(in) = N-(hexadecanoyl)-sphing-4-enine-1-phosphate(out). It carries out the reaction N-(9Z-octadecenoyl)-sphing-4-enine-1-phosphate(in) = N-(9Z-octadecenoyl)-sphing-4-enine-1-phosphate(out). In terms of biological role, mediates the intracellular transfer of ceramide-1-phosphate (C1P) between organelle membranes and the cell membrane. Required for normal structure of the Golgi stacks. Can bind phosphoceramides with a variety of aliphatic chains, but has a preference for lipids with saturated C16:0 or monounsaturated C18:1 aliphatic chains, and is inefficient with phosphoceramides containing lignoceryl (C24:0). Plays a role in the regulation of the cellular levels of ceramide-1-phosphate, and thereby contributes to the regulation of phospholipase PLA2G4A activity and the release of arachidonic acid. Has no activity with galactosylceramide, lactosylceramide, sphingomyelin, phosphatidylcholine, phosphatidic acid and ceramide. C1P transfer is stimulated by phosphatidylserine in C1P source vesicles. Regulates autophagy, inflammasome mediated IL1B and IL18 processing, and pyroptosis, but not apoptosis. In Homo sapiens (Human), this protein is Ceramide-1-phosphate transfer protein.